The primary structure comprises 166 residues: FMN reductase (NADH) RutF (166 aa).

Belongs to the non-flavoprotein flavin reductase family. RutF subfamily.

The catalysed reaction is FMNH2 + NAD(+) = FMN + NADH + 2 H(+). Its function is as follows. Catalyzes the reduction of FMN to FMNH2 which is used to reduce pyrimidine by RutA via the Rut pathway. This is FMN reductase (NADH) RutF from Cronobacter turicensis (strain DSM 18703 / CCUG 55852 / LMG 23827 / z3032).